The primary structure comprises 2545 residues: MALPSLIAFGALAPWPASDRLDQLRNALQHHNSLKPITKAIQELPLLWKALSNQDQSLHSIAGEAAADQLAQWISGAGTAQLVDDKGNVTRMPLTTIAQIAQYVSYLCQYEEPLRHESIIKSAAIGGGIQGFCIGLLSALAVASGKTEDDVGNFAAMSVRLAFCVGAYVDLDRHRNGGDSKASTIAVRWKTPTTLEDIQRLLSRHPDTYIAVVRDIRDVTITVPASVMEHLIEDLSQIGASLRDTGVSGRYHVAIHEGIPQKILETCQAQFSPTINGQPLVRSNTDAHLFSGEDTALLALECILGERADWYSTISTAASALNQISANPFILSIGTDPVPQSVARSFPVVKATMIADRVNGIVEPEIPALAPDPFGSVSQGYPKDAIAIIGMGCRFPGADSIDEYWNLLTEGKSMLSEIPEARFGRGRPARSNSSLRFWGNFLRDIEAFDHGFFKKSPREAVSMDPQQRVLLQVAYEALESSGYFADSSRPEDVGCYIGACATDYDFNVASHPPSAYSAIGTLRSFLSGKLSHYFGWSGPSLVLDTACSSSAVAIHTACTALRTGQCSQALAGGITLMTSPYLYENFAAAHFLSPTGSSKPFSADADGYCRGEGGGLVVLKRLSDALRDNDHILGVIAGSAVNQNDNCVPITVPHTSSQGNLYERVTEQAGVRPSEVTFVEAHGTGTPVGDPIEMESIRRVFGGLHRVAPLIVSSAKGNIGHLEGASGVAALIKALLQMEHHLAPRQASFKTLNPKIPALEPDNLCIPTSNLALSGERLAACINNYGAAGSNAAMIVLEPPRKSVTYHDKSKMSISSRPKIHPIQLAAASLGGLLAYCVALDQYCQRLRFTQDTSEQPQVLSDLAYSLSTRLNQELPFTLTMTVTDLDQLQAQLRQQTVTSNNIKQRSKAPPVVLCFGGQVSDRVALDKCLWQESTLLRSYLDICDNTLRVLGYPGLYPSIFQNEAVTDVVLLHSMIFALQYSCAQAWLESGLKVDALVGHSFGQLTALCVSGILSLRDGLRLVAGRASLMQKHWGPESGKMIAIETDQQTLEELQKVICESNASYNFEIACFNGPTSHVVVSDRCSASELETKLMERAIRHRSLDVPYGFHSRFTEPLLPHLEDLASSLTFHEPKIPLETCTDMGTWTEPTSKLIAAHTREPVFFGKAIQRLQARLGPCTWLEAGSDSSIVNMVRRALGQASATANNFVSLQLNKPNSSKLVVDATVALWDASHRAQFWNFHRLQRRQYDHLRLPPYAWEKSKHWLELDMSAALNSDKTNTPPPTNTAAQVELPAVLIRLKSFDSQGHHFVINPSSEEYQTIVKDLESLGSAVCPSTLYVELASRAVRVAEEDKGNGLLSIKDLRVHSLLGVNVHQTISLDLQRLAQSWRFRITNADGSISGSNPGESFCHAEGTVNLKVADDSLEEEFCRYERLTGHNKIISIADDPRSESLRGNVLYNMLGRVVNYPDWYRGVKSVAALDLRVVAKVTCPVGIPEIVSKESTTQLPILESFIQIASLHANCLHECRGGEVFQFTRADHMQWAPGFDLHGYGDSAEASWDVLAYNSTNAENVVYDIFVHDAVTGRLVLLVLGANFTDIRRPVPISAGLNTSLASEKDIPMLKNANAERAEISLNSQLPAESHSQANLTRPGKDAKTSIYEDICGLLEKLADIPGDQVSGEATFDNLGVDSLMMIEVISELSTLFRVDLPIHELEELTDINSLVDYLHGKGCVGSLYVEDSGNASSLSSSHAISTGASSPPDSSGASAMTTPPETLSLVDYPGSLTTKQESRAAPAISNGTGRQPLDMGPYGIQQVFTRLRFDFEKYAEQTGAKGFWTNVYPQQADLVCAYVVDAYRKLGCDLATLAAGQQLPSMNTLPRHKHLVAQLRNILVESGLLELRGNQVHVRTAKTVDSTPTAIRYEQMLQRHPFGASETKLLNVTGPRLADCLTGQKEPLSLLFGDKHNRDLLADFYANSQMLKAATRLLAEFVSSTFSAAQSGDTLCILEVGAGTGGTTRYLVDVLNRCGIPYEYTFTDISQSLVTQAKRNFASLPQMRFMTFDCDRPAPQELLGKFHIVISTNCIHATSNITTSTTNILPTLRDDGVLCLVEFTRNLYWFDLVFGLLEGWWLFSDGRQHALANEWFWDRSLRAAGFKHVSWTDGNTEEAKTLRLICAFRGEAKEDRNLAAPNGAITKRAGVPMEEVVWKRVGTLDLSADIYFPKTPDPPGKKRPIALLIHGGGHFLFGRKDVPMKHIRTLIERGFLPISTDYRLCPETNLFEGPMTDCCDALKWATETLPTLPLSGPTVRPDPTKVVSLGWSSGGQLAMSLGYTAPVKGIKAPDAIFALYPPSDMESNHWHQPCYPLAAEEEPTEILDILAGVRESPIVEYAPVSEKRTMALSLTLKDDRASIILHMCWKSQTVPILVHGLPYKKNLPDTDKTDWKYRPPASAEQVQAISPLWQIRQGNYKTPTFIVHGNGDDWLPLSMSERTVEELKRRGIPASLAVPEQCGHAFDLFPVGDPLGVGWTSLEQGYDFICRQLGMS.

An N-terminal acylcarrier protein transacylase (SAT) domain region spans residues 8–261 (AFGALAPWPA…HVAIHEGIPQ (254 aa)). The Ketosynthase family 3 (KS3) domain maps to 383 to 798 (KDAIAIIGMG…GSNAAMIVLE (416 aa)). Catalysis depends on for beta-ketoacyl synthase activity residues Cys-547, His-682, and His-721. A malonyl-CoA:ACP transacylase (MAT) domain region spans residues 914 to 1218 (LCFGGQVSDR…VSLQLNKPNS (305 aa)). Residue Ser-1001 is the For acyl/malonyl transferase activity of the active site. The tract at residues 1293-1423 (LPAVLIRLKS…GTVNLKVADD (131 aa)) is N-terminal hotdog fold. Residues 1293-1605 (LPAVLIRLKS…FTDIRRPVPI (313 aa)) enclose the PKS/mFAS DH domain. Residues 1296–1604 (VLIRLKSFDS…NFTDIRRPVP (309 aa)) form a product template (PT) domain region. The tract at residues 1449–1605 (RSESLRGNVL…FTDIRRPVPI (157 aa)) is C-terminal hotdog fold. The Carrier domain maps to 1657–1731 (TSIYEDICGL…SLVDYLHGKG (75 aa)). Position 1691 is an O-(pantetheine 4'-phosphoryl)serine (Ser-1691). The span at 1748–1768 (SSSHAISTGASSPPDSSGASA) shows a compositional bias: low complexity. Positions 1748–1773 (SSSHAISTGASSPPDSSGASAMTTPP) are disordered. The tract at residues 1931 to 2163 (FGASETKLLN…GFKHVSWTDG (233 aa)) is methyltransferase (CMeT) domain. Positions 2198–2544 (AGVPMEEVVW…YDFICRQLGM (347 aa)) are claisen cyclase (CLC) domain. Active-site for thioesterase activity residues include Ser-2321, Asp-2481, and His-2513.

Methylphloroacetophenone synthase; part of the gene cluster that mediates the biosynthesis of usnic acid, a dibenzofuran lichen product possessing a broad spectrum of biological activities. Two genes, mpas and mpao, comprise the usnic acid biosynthetic gene cluster with a single post-PKS enzyme, the methylphloracetophenone oxidase (mpao). The methylphloroacetophenone synthase (mpas) is a non-reducing polyketide synthase that produces methylphloracetophenone from acetate via a methylated tetraketide intermediate. The methylphloroacetophenone oxidase then carries out the oxidative dimerization of methylphloracetophenone to usnic acid. This chain is Methylphloroacetophenone synthase, found in Cladonia uncialis (Cup lichen).